We begin with the raw amino-acid sequence, 149 residues long: Large ribosomal subunit protein bL9 (149 aa).

The protein belongs to the bacterial ribosomal protein bL9 family.

Binds to the 23S rRNA. The chain is Large ribosomal subunit protein bL9 from Cutibacterium acnes (strain DSM 16379 / KPA171202) (Propionibacterium acnes).